The chain runs to 392 residues: Stilbene synthase 2 (392 aa).

Position 55–58 (55–58) interacts with substrate; it reads KFNR. Residue cysteine 164 is part of the active site. Residues leucine 267 and 305 to 307 each bind substrate; that span reads GGP.

The protein belongs to the thiolase-like superfamily. Chalcone/stilbene synthases family. In terms of assembly, homodimer.

The protein localises to the cytoplasm. The enzyme catalyses 4-coumaroyl-CoA + 3 malonyl-CoA + 3 H(+) = trans-resveratrol + 4 CO2 + 4 CoA. The protein operates within phytoalexin biosynthesis; 3,4',5-trihydroxystilbene biosynthesis; 3,4',5-trihydroxystilbene from trans-4-coumarate: step 2/2. Functionally, mediates resistance to pathogens which are sensitive to stilbenes. This is Stilbene synthase 2 from Vitis vinifera (Grape).